Reading from the N-terminus, the 147-residue chain is 3-dehydroquinate dehydratase (147 aa).

The Proton acceptor role is filled by Y23. Substrate contacts are provided by N74, H80, and D87. The Proton donor role is filled by H100. Substrate contacts are provided by residues 101-102 (LS) and R111.

The protein belongs to the type-II 3-dehydroquinase family. In terms of assembly, homododecamer.

It carries out the reaction 3-dehydroquinate = 3-dehydroshikimate + H2O. The protein operates within metabolic intermediate biosynthesis; chorismate biosynthesis; chorismate from D-erythrose 4-phosphate and phosphoenolpyruvate: step 3/7. In terms of biological role, catalyzes a trans-dehydration via an enolate intermediate. This chain is 3-dehydroquinate dehydratase, found in Glaesserella parasuis serovar 5 (strain SH0165) (Haemophilus parasuis).